A 130-amino-acid polypeptide reads, in one-letter code: Small ribosomal subunit protein uS9 (130 aa).

The interval 99 to 130 (KSAGMLTRDPRMKERKKPGLKKARKASQFSKR) is disordered. Positions 111 to 130 (KERKKPGLKKARKASQFSKR) are enriched in basic residues.

It belongs to the universal ribosomal protein uS9 family.

The polypeptide is Small ribosomal subunit protein uS9 (Latilactobacillus sakei subsp. sakei (strain 23K) (Lactobacillus sakei subsp. sakei)).